A 186-amino-acid polypeptide reads, in one-letter code: Methyl-CpG-binding domain-containing protein 4 (186 aa).

The segment at 22 to 77 (GRLIDTYAAQCDNCHKWRVIDSQEEYEDIRSKMLEDPFNCQKKQGMSCEEPADIDY) adopts a CW-type zinc-finger fold. Residues 31 to 69 (QCDNCHKWRVIDSQEEYEDIRSKMLEDPFNCQKKQGMSC) carry the MBD-associated domain (MAD) motif. C32, C35, C61, and C69 together coordinate Zn(2+). The 71-residue stretch at 83-153 (WVIDKPGLPK…GDFNFTVPKV (71 aa)) folds into the MBD domain. A disordered region spans residues 154–186 (MEDTVPPDPKLGSPFPSTTTTTSEKSSVKQSHN). Residues 166–178 (SPFPSTTTTTSEK) show a composition bias toward low complexity.

In terms of tissue distribution, expressed in rosette leaves, buds, flowers, stems, mature seeds and roots.

It localises to the nucleus. In terms of biological role, transcriptional regulator that binds CpG, CpNpN and CpNpG (N is A, T, or C) islands in promoters regardless the DNA methylation status. Plays probably a role in gene silencing. In Arabidopsis thaliana (Mouse-ear cress), this protein is Methyl-CpG-binding domain-containing protein 4 (MBD4).